A 121-amino-acid chain; its full sequence is Large ribosomal subunit protein bL19 (121 aa).

Belongs to the bacterial ribosomal protein bL19 family.

In terms of biological role, this protein is located at the 30S-50S ribosomal subunit interface and may play a role in the structure and function of the aminoacyl-tRNA binding site. This chain is Large ribosomal subunit protein bL19, found in Mesomycoplasma hyopneumoniae (strain 7448) (Mycoplasma hyopneumoniae).